Here is a 156-residue protein sequence, read N- to C-terminus: Ribosomal RNA large subunit methyltransferase H (156 aa).

S-adenosyl-L-methionine-binding positions include Leu-73, Gly-104, and 123 to 128 (VSSLTL).

It belongs to the RNA methyltransferase RlmH family. As to quaternary structure, homodimer.

Its subcellular location is the cytoplasm. The catalysed reaction is pseudouridine(1915) in 23S rRNA + S-adenosyl-L-methionine = N(3)-methylpseudouridine(1915) in 23S rRNA + S-adenosyl-L-homocysteine + H(+). Its function is as follows. Specifically methylates the pseudouridine at position 1915 (m3Psi1915) in 23S rRNA. In Paraburkholderia xenovorans (strain LB400), this protein is Ribosomal RNA large subunit methyltransferase H.